A 444-amino-acid chain; its full sequence is Tol-Pal system protein TolB (444 aa).

The signal sequence occupies residues 1-19 (MRNIIYFILSLLFSVTSYA).

It belongs to the TolB family. In terms of assembly, the Tol-Pal system is composed of five core proteins: the inner membrane proteins TolA, TolQ and TolR, the periplasmic protein TolB and the outer membrane protein Pal. They form a network linking the inner and outer membranes and the peptidoglycan layer.

The protein resides in the periplasm. Functionally, part of the Tol-Pal system, which plays a role in outer membrane invagination during cell division and is important for maintaining outer membrane integrity. The sequence is that of Tol-Pal system protein TolB from Rickettsia peacockii (strain Rustic).